A 324-amino-acid polypeptide reads, in one-letter code: Protoheme IX farnesyltransferase 2 (324 aa).

Transmembrane regions (helical) follow at residues 39–59, 63–83, 115–135, 137–157, 166–186, 192–212, 239–259, 260–280, and 302–322; these read LIKP…MLLA, IPSP…AGSA, HALV…WATT, LLSA…YTLV, IVWG…GVTG, ALVM…SLAM, IVVF…ATGW, LYTA…HRLH, and LMIV…VLGW.

It belongs to the UbiA prenyltransferase family. Protoheme IX farnesyltransferase subfamily.

It is found in the cell membrane. The enzyme catalyses heme b + (2E,6E)-farnesyl diphosphate + H2O = Fe(II)-heme o + diphosphate. It functions in the pathway porphyrin-containing compound metabolism; heme O biosynthesis; heme O from protoheme: step 1/1. Its function is as follows. Converts heme B (protoheme IX) to heme O by substitution of the vinyl group on carbon 2 of heme B porphyrin ring with a hydroxyethyl farnesyl side group. In Saccharopolyspora erythraea (strain ATCC 11635 / DSM 40517 / JCM 4748 / NBRC 13426 / NCIMB 8594 / NRRL 2338), this protein is Protoheme IX farnesyltransferase 2.